The following is a 211-amino-acid chain: SsrA-binding protein (211 aa).

2 disordered regions span residues 1-20 (MHRRSSKSYSSRNSKTPERS) and 170-211 (RLRR…RHEN). A compositionally biased stretch (polar residues) spans 177–187 (QRNTQRSVTPR).

Belongs to the SmpB family.

It localises to the cytoplasm. Functionally, required for rescue of stalled ribosomes mediated by trans-translation. Binds to transfer-messenger RNA (tmRNA), required for stable association of tmRNA with ribosomes. tmRNA and SmpB together mimic tRNA shape, replacing the anticodon stem-loop with SmpB. tmRNA is encoded by the ssrA gene; the 2 termini fold to resemble tRNA(Ala) and it encodes a 'tag peptide', a short internal open reading frame. During trans-translation Ala-aminoacylated tmRNA acts like a tRNA, entering the A-site of stalled ribosomes, displacing the stalled mRNA. The ribosome then switches to translate the ORF on the tmRNA; the nascent peptide is terminated with the 'tag peptide' encoded by the tmRNA and targeted for degradation. The ribosome is freed to recommence translation, which seems to be the essential function of trans-translation. The protein is SsrA-binding protein of Tropheryma whipplei (strain TW08/27) (Whipple's bacillus).